We begin with the raw amino-acid sequence, 78 residues long: Conotoxin 6 (78 aa).

The signal sequence occupies residues 1 to 22; that stretch reads MKLTCMMIVAVLFLTAWIFITA. Positions 23–51 are excised as a propeptide; that stretch reads DNSRNGIENLPRMRRHEMKNPKASKLNKR. 3 cysteine pairs are disulfide-bonded: C53–C69, C60–C73, and C68–C77.

Belongs to the conotoxin O1 superfamily. In terms of tissue distribution, expressed by the venom duct.

It localises to the secreted. This chain is Conotoxin 6, found in Conus imperialis (Imperial cone).